Consider the following 182-residue polypeptide: Isopentenyl-diphosphate Delta-isomerase (182 aa).

Positions 25 and 32 each coordinate Mn(2+). The 135-residue stretch at 30 to 164 (LLHLAFSSWL…PWAFSPWMVM (135 aa)) folds into the Nudix hydrolase domain. C67 is a catalytic residue. H69 contributes to the Mn(2+) binding site. Position 87 (E87) interacts with Mg(2+). Residues E114 and E116 each coordinate Mn(2+). Residue E116 is part of the active site.

It belongs to the IPP isomerase type 1 family. In terms of assembly, homodimer. Mg(2+) serves as cofactor. The cofactor is Mn(2+).

The protein resides in the cytoplasm. The enzyme catalyses isopentenyl diphosphate = dimethylallyl diphosphate. The protein operates within isoprenoid biosynthesis; dimethylallyl diphosphate biosynthesis; dimethylallyl diphosphate from isopentenyl diphosphate: step 1/1. Its function is as follows. Catalyzes the 1,3-allylic rearrangement of the homoallylic substrate isopentenyl (IPP) to its highly electrophilic allylic isomer, dimethylallyl diphosphate (DMAPP). The chain is Isopentenyl-diphosphate Delta-isomerase from Escherichia coli O9:H4 (strain HS).